The chain runs to 218 residues: Chromophore lyase CpcT/CpeT 1 (218 aa).

It belongs to the CpcT/CpeT biliprotein lyase family.

Functionally, covalently attaches a chromophore to Cys residue(s) of phycobiliproteins. This Synechococcus sp. (strain JA-3-3Ab) (Cyanobacteria bacterium Yellowstone A-Prime) protein is Chromophore lyase CpcT/CpeT 1.